We begin with the raw amino-acid sequence, 234 residues long: Nitroreductase NfnB (234 aa).

25–29 (RRAVR) lines the FMN pocket. 4 residues coordinate NADP(+): S55, R105, Y113, and I118. FMN-binding positions include Y137, 181-182 (AL), and R223.

It belongs to the nitroreductase family. As to quaternary structure, homodimer. It depends on FMN as a cofactor.

Functionally, confers resistance to antitubercular drugs benzothiazinone (BTZ) and dinitrobenzamide (DNB). Inactivates BTZ and DNB by reducing an essential nitro group of these compounds to amino group or to hydroxyl amine, respectively, using NADH or NADPH as source of reducing equivalents; two electrons are transferred. Able to reduce the nitro group of bicyclic nitroimidazole PA-824, but not of quinone menadione, nitrofurazone, methyl-4-nitrobenzoate, 4-nitrobenzene methyl sulfonate or 4-nitroacetophenone. This Mycolicibacterium smegmatis (strain ATCC 700084 / mc(2)155) (Mycobacterium smegmatis) protein is Nitroreductase NfnB.